We begin with the raw amino-acid sequence, 700 residues long: Glutamine synthetase (700 aa).

One can recognise a GS beta-grasp domain in the interval 65–155 (YHFTPPGSSP…LPTAFCSYGG (91 aa)). The GS catalytic domain maps to 159–589 (DRDSLLRSME…TMQEMIRKDL (431 aa)). Residues Glu-196, Glu-198, Glu-267, and Glu-274 each coordinate Mg(2+). Residues 318–319 (NG) and Gly-319 each bind L-glutamate. His-323 is a Mg(2+) binding site. 2 residues coordinate ATP: Ser-327 and Arg-435. Arg-435 contributes to the L-glutamate binding site. Residue Glu-472 participates in Mg(2+) binding.

The protein belongs to the glutamine synthetase family. Homohexamer. Mg(2+) serves as cofactor.

The protein resides in the cytoplasm. It carries out the reaction L-glutamate + NH4(+) + ATP = L-glutamine + ADP + phosphate + H(+). Its activity is regulated as follows. The activity of this enzyme is not controlled by adenylation. Functionally, catalyzes the ATP-dependent biosynthesis of glutamine from glutamate and ammonia. This is Glutamine synthetase from Butyrivibrio fibrisolvens.